Consider the following 182-residue polypeptide: Methionine-R-sulfoxide reductase B2, mitochondrial (182 aa).

Residues 1 to 20 constitute a mitochondrion transit peptide; sequence MARLLWLLRGLTLGTAPRRA. Positions 51 to 180 constitute a MsrB domain; the sequence is KSEWQKKLTP…NSVALKFKPR (130 aa). Cysteine 90, cysteine 93, cysteine 146, and cysteine 149 together coordinate Zn(2+). Cysteine 169 acts as the Nucleophile in catalysis.

Belongs to the MsrB Met sulfoxide reductase family. Interacts with DAOA; the interaction is direct. The cofactor is Zn(2+). As to expression, ubiquitous. Detected in retina, ocular ciliary body, skeletal muscle, heart, colon, bone marrow, cerebellum, small intestine, fetal brain, fetal liver, kidney, spinal cord, lung, placenta and prostate.

It localises to the mitochondrion. It carries out the reaction L-methionyl-[protein] + [thioredoxin]-disulfide + H2O = L-methionyl-(R)-S-oxide-[protein] + [thioredoxin]-dithiol. The enzyme catalyses [thioredoxin]-disulfide + L-methionine + H2O = L-methionine (R)-S-oxide + [thioredoxin]-dithiol. Functionally, methionine-sulfoxide reductase that specifically reduces methionine (R)-sulfoxide back to methionine. While in many cases, methionine oxidation is the result of random oxidation following oxidative stress, methionine oxidation is also a post-translational modification that takes place on specific residue. Upon oxidative stress, may play a role in the preservation of mitochondrial integrity by decreasing the intracellular reactive oxygen species build-up through its scavenging role, hence contributing to cell survival and protein maintenance. The chain is Methionine-R-sulfoxide reductase B2, mitochondrial (MSRB2) from Homo sapiens (Human).